A 62-amino-acid chain; its full sequence is Small ribosomal subunit protein eS31 (62 aa).

4 residues coordinate Zn(2+): C29, C32, C48, and C51. A C4-type zinc finger spans residues 29-51 (CPRCGSFMAFHKWPVPRWHCGKC).

The protein belongs to the eukaryotic ribosomal protein eS31 family. As to quaternary structure, part of the 30S ribosomal subunit. Zn(2+) is required as a cofactor.

The polypeptide is Small ribosomal subunit protein eS31 (Hyperthermus butylicus (strain DSM 5456 / JCM 9403 / PLM1-5)).